We begin with the raw amino-acid sequence, 218 residues long: Envelope glycoprotein L (218 aa).

The tract at residues 57–185 (KLVKATRLDF…LGPPPLGCFT (129 aa)) is interaction with gH. The 159-residue stretch at 60 to 218 (KATRLDFTWG…ASYYANLQKT (159 aa)) folds into the gL alphaherpesvirus-type domain. Disulfide bonds link Cys-81/Cys-113 and Cys-183/Cys-206.

It belongs to the herpesviridae glycoprotein L (gL) family. Alphaherpesvirinae gL subfamily. In terms of assembly, interacts with glycoprotein H (gH); this interaction is necessary for the correct processing and cell surface expression of gH. The heterodimer gH/gL seems to interact with gB trimers during fusion.

It localises to the virion membrane. The protein resides in the host cell membrane. It is found in the host Golgi apparatus. Its subcellular location is the host trans-Golgi network. Functionally, the heterodimer glycoprotein H-glycoprotein L is required for the fusion of viral and plasma membranes leading to virus entry into the host cell. Acts as a functional inhibitor of gH and maintains gH in an inhibited form. Upon binding to host integrins, gL dissociates from gH leading to activation of the viral fusion glycoproteins gB and gH. The chain is Envelope glycoprotein L from Equus caballus (Horse).